The chain runs to 199 residues: Small ribosomal subunit protein uS4 (199 aa).

Residues 94–157 (SRLDNIVYRM…QNVPTILASI (64 aa)) form the S4 RNA-binding domain.

It belongs to the universal ribosomal protein uS4 family. Part of the 30S ribosomal subunit. Contacts protein S5. The interaction surface between S4 and S5 is involved in control of translational fidelity.

Its function is as follows. One of the primary rRNA binding proteins, it binds directly to 16S rRNA where it nucleates assembly of the body of the 30S subunit. Functionally, with S5 and S12 plays an important role in translational accuracy. This chain is Small ribosomal subunit protein uS4, found in Mycoplasma mobile (strain ATCC 43663 / 163K / NCTC 11711) (Mesomycoplasma mobile).